A 116-amino-acid polypeptide reads, in one-letter code: Large ribosomal subunit protein bL19 (116 aa).

This sequence belongs to the bacterial ribosomal protein bL19 family.

This protein is located at the 30S-50S ribosomal subunit interface and may play a role in the structure and function of the aminoacyl-tRNA binding site. The sequence is that of Large ribosomal subunit protein bL19 from Clostridioides difficile (strain 630) (Peptoclostridium difficile).